We begin with the raw amino-acid sequence, 1234 residues long: DNA-directed RNA polymerase I subunit RPA2 (1234 aa).

Residues 1119 to 1150 form a C4-type zinc finger; the sequence is CRQCGSFLSTQPTVSPFIGKRKAVSTVRCRNC.

Belongs to the RNA polymerase beta chain family. Component of the RNA polymerase I (Pol I) complex consisting of 14 subunits.

It localises to the nucleus. Its subcellular location is the nucleolus. It catalyses the reaction RNA(n) + a ribonucleoside 5'-triphosphate = RNA(n+1) + diphosphate. Functionally, DNA-dependent RNA polymerase catalyzes the transcription of DNA into RNA using the four ribonucleoside triphosphates as substrates. Second largest core component of RNA polymerase I which synthesizes ribosomal RNA precursors. Proposed to contribute to the polymerase catalytic activity and forms the polymerase active center together with the largest subunit. Pol I is composed of mobile elements and RPA2 is part of the core element with the central large cleft and probably a clamp element that moves to open and close the cleft. In Neurospora crassa (strain ATCC 24698 / 74-OR23-1A / CBS 708.71 / DSM 1257 / FGSC 987), this protein is DNA-directed RNA polymerase I subunit RPA2 (acr-2).